We begin with the raw amino-acid sequence, 351 residues long: Dihydroorotate dehydrogenase (quinone) (351 aa).

FMN is bound by residues 67-71 and Thr91; that span reads AGFDK. Lys71 is a substrate binding site. A substrate-binding site is contributed by 116-120; it reads NAMGF. FMN-binding residues include Asn145 and Asn178. Residue Asn178 coordinates substrate. Ser181 serves as the catalytic Nucleophile. Substrate is bound at residue Asn183. Residues Lys214 and Thr242 each coordinate FMN. 243–244 contacts substrate; the sequence is NT. Residues Gly262, Gly291, and 312 to 313 contribute to the FMN site; that span reads YS.

This sequence belongs to the dihydroorotate dehydrogenase family. Type 2 subfamily. Monomer. It depends on FMN as a cofactor.

The protein resides in the cell membrane. The enzyme catalyses (S)-dihydroorotate + a quinone = orotate + a quinol. The protein operates within pyrimidine metabolism; UMP biosynthesis via de novo pathway; orotate from (S)-dihydroorotate (quinone route): step 1/1. Its function is as follows. Catalyzes the conversion of dihydroorotate to orotate with quinone as electron acceptor. The protein is Dihydroorotate dehydrogenase (quinone) of Helicobacter pylori (strain P12).